The sequence spans 370 residues: A-type ATP synthase subunit C (370 aa).

Belongs to the V-ATPase V0D/AC39 subunit family. In terms of assembly, has multiple subunits with at least A(3), B(3), C, D, E, F, H, I and proteolipid K(x).

It localises to the cell membrane. In terms of biological role, component of the A-type ATP synthase that produces ATP from ADP in the presence of a proton gradient across the membrane. The chain is A-type ATP synthase subunit C from Pyrococcus abyssi (strain GE5 / Orsay).